The following is a 444-amino-acid chain: Xylose isomerase (444 aa).

Catalysis depends on residues histidine 101 and aspartate 104. Mg(2+)-binding residues include glutamate 232, glutamate 268, histidine 271, aspartate 296, aspartate 307, aspartate 309, and aspartate 339.

Belongs to the xylose isomerase family. As to quaternary structure, homotetramer. The cofactor is Mg(2+).

The protein resides in the cytoplasm. The enzyme catalyses alpha-D-xylose = alpha-D-xylulofuranose. The protein is Xylose isomerase of Thermotoga petrophila (strain ATCC BAA-488 / DSM 13995 / JCM 10881 / RKU-1).